The primary structure comprises 306 residues: UDP-N-acetylenolpyruvoylglucosamine reductase (306 aa).

An FAD-binding PCMH-type domain is found at 25 to 188 (RVGGPADWLF…IEARFRAEPG (164 aa)). Arg168 is a catalytic residue. Positions 199–214 (EQLARRDASQPTKDRS) are enriched in basic and acidic residues. Positions 199-232 (EQLARRDASQPTKDRSAGSTFRNPAGYSSTGRAD) are disordered. Residues 215-229 (AGSTFRNPAGYSSTG) show a composition bias toward polar residues. Residue Ser217 is the Proton donor of the active site. Residue Glu299 is part of the active site.

Belongs to the MurB family. The cofactor is FAD.

It localises to the cytoplasm. The enzyme catalyses UDP-N-acetyl-alpha-D-muramate + NADP(+) = UDP-N-acetyl-3-O-(1-carboxyvinyl)-alpha-D-glucosamine + NADPH + H(+). The protein operates within cell wall biogenesis; peptidoglycan biosynthesis. Cell wall formation. The protein is UDP-N-acetylenolpyruvoylglucosamine reductase of Paracoccus denitrificans (strain Pd 1222).